The primary structure comprises 653 residues: Dystrotelin (653 aa).

The segment at 223–279 adopts a ZZ-type zinc-finger fold; it reads THPVRCSVCRTFPIIGLRYHCLKCLDFDICELCFLSGLHKNSHEKSHTVMEECVQMS. Zn(2+) contacts are provided by Cys-228, Cys-231, Cys-243, Cys-246, Cys-252, Cys-255, His-265, and His-269. The stretch at 384–411 forms a coiled coil; sequence RDSLNTLLRERRLLRKQLHRYKQKLQGT.

As to expression, strongly expressed in the nervous and muscular tissues.

It is found in the cell membrane. The polypeptide is Dystrotelin (Dytn) (Mus musculus (Mouse)).